A 91-amino-acid polypeptide reads, in one-letter code: Acylphosphatase (91 aa).

An Acylphosphatase-like domain is found at 3–91; that stretch reads CLRAIVKGKV…ANYSDFRIKH (89 aa). Catalysis depends on residues Arg-18 and Asn-36.

It belongs to the acylphosphatase family.

It catalyses the reaction an acyl phosphate + H2O = a carboxylate + phosphate + H(+). The chain is Acylphosphatase (acyP) from Dehalococcoides mccartyi (strain ATCC BAA-2100 / JCM 16839 / KCTC 5957 / BAV1).